A 399-amino-acid chain; its full sequence is CCA-adding enzyme (399 aa).

Residues G28 and R31 each coordinate ATP. G28 and R31 together coordinate CTP. 2 residues coordinate Mg(2+): D41 and D43. ATP-binding residues include R112, D155, R158, R161, and R164. CTP is bound by residues R112, D155, R158, R161, and R164.

It belongs to the tRNA nucleotidyltransferase/poly(A) polymerase family. Bacterial CCA-adding enzyme type 3 subfamily. Homodimer. It depends on Mg(2+) as a cofactor.

The enzyme catalyses a tRNA precursor + 2 CTP + ATP = a tRNA with a 3' CCA end + 3 diphosphate. It catalyses the reaction a tRNA with a 3' CCA end + 2 CTP + ATP = a tRNA with a 3' CCACCA end + 3 diphosphate. In terms of biological role, catalyzes the addition and repair of the essential 3'-terminal CCA sequence in tRNAs without using a nucleic acid template. Adds these three nucleotides in the order of C, C, and A to the tRNA nucleotide-73, using CTP and ATP as substrates and producing inorganic pyrophosphate. tRNA 3'-terminal CCA addition is required both for tRNA processing and repair. Also involved in tRNA surveillance by mediating tandem CCA addition to generate a CCACCA at the 3' terminus of unstable tRNAs. While stable tRNAs receive only 3'-terminal CCA, unstable tRNAs are marked with CCACCA and rapidly degraded. The sequence is that of CCA-adding enzyme from Staphylococcus saprophyticus subsp. saprophyticus (strain ATCC 15305 / DSM 20229 / NCIMB 8711 / NCTC 7292 / S-41).